A 1177-amino-acid chain; its full sequence is Lon protease homolog, mitochondrial (1177 aa).

Disordered stretches follow at residues 72 to 197 (RTNS…KSPA) and 353 to 386 (AKKA…DSST). The segment covering 103–150 (RGRELWVQEKDKSDKPEKSDKPDKTDKTDKDKPEKQDKDKTDKPEKTK) has biased composition (basic and acidic residues). Positions 154–182 (TPSSTASTGAGEAAAPPSAPPSGSGSSSS) are enriched in low complexity. In terms of domain architecture, Lon N-terminal spans 203 to 505 (ILAVPISDRP…RALILLKREH (303 aa)). The segment covering 353 to 383 (AKKAKSGKTEDSKHDSKVTSKDGKETTEKYD) has biased composition (basic and acidic residues). Position 657-664 (657-664 (GPPGVGKT)) interacts with ATP. The segment covering 883–916 (EKDKESAEKKTTKSKSKEVNEEPAAKEEKDKATE) has biased composition (basic and acidic residues). The tract at residues 883–932 (EKDKESAEKKTTKSKSKEVNEEPAAKEEKDKATESAESSETKVGTKAPPV) is disordered. The 187-residue stretch at 964-1150 (DPPPGVVMGL…QDVYDVVFQG (187 aa)) folds into the Lon proteolytic domain. Residues Ser-1056 and Lys-1099 contribute to the active site.

This sequence belongs to the peptidase S16 family. As to quaternary structure, homohexamer or homoheptamer. Organized in a ring with a central cavity.

It is found in the mitochondrion matrix. The catalysed reaction is Hydrolysis of proteins in presence of ATP.. ATP-dependent serine protease that mediates the selective degradation of misfolded, unassembled or oxidatively damaged polypeptides as well as certain short-lived regulatory proteins in the mitochondrial matrix. May also have a chaperone function in the assembly of inner membrane protein complexes. Participates in the regulation of mitochondrial gene expression and in the maintenance of the integrity of the mitochondrial genome. Binds to mitochondrial DNA in a site-specific manner. This chain is Lon protease homolog, mitochondrial, found in Yarrowia lipolytica (strain CLIB 122 / E 150) (Yeast).